We begin with the raw amino-acid sequence, 522 residues long: Probable G-protein coupled receptor egl-47 (522 aa).

The next 7 membrane-spanning stretches (helical) occupy residues 140–160 (IIKL…NSFL), 184–204 (ASMI…LSAI), 238–258 (FVFF…KVVE), 276–296 (FILV…YHLY), 345–365 (PLLL…LYFL), 398–418 (ICWA…ICST), and 472–492 (LERT…LLLF).

Belongs to the G-protein coupled receptor family. Expressed in some neurons in the head, the HSN neurons and the PVQ interneurons of the tail.

It localises to the membrane. Its function is as follows. Orphan receptor. Regulates egg-laying probably by activating guanine nucleotide-binding protein goa-1, in the hermaphrodite-specific neurons (HSNs). This Caenorhabditis elegans protein is Probable G-protein coupled receptor egl-47.